Consider the following 454-residue polypeptide: tRNA modification GTPase MnmE (454 aa).

R23, E86, and R125 together coordinate (6S)-5-formyl-5,6,7,8-tetrahydrofolate. Positions 221 to 376 (GLTLAIVGRP…LREQILRMVS (156 aa)) constitute a TrmE-type G domain. K(+) is bound at residue N231. Residues 231–236 (NVGKSS), 250–256 (TAIPGTT), and 275–278 (DTAG) each bind GTP. A Mg(2+)-binding site is contributed by S235. Residues T250, I252, and T255 each coordinate K(+). Position 256 (T256) interacts with Mg(2+). K454 is a binding site for (6S)-5-formyl-5,6,7,8-tetrahydrofolate.

The protein belongs to the TRAFAC class TrmE-Era-EngA-EngB-Septin-like GTPase superfamily. TrmE GTPase family. Homodimer. Heterotetramer of two MnmE and two MnmG subunits. K(+) is required as a cofactor.

The protein localises to the cytoplasm. Exhibits a very high intrinsic GTPase hydrolysis rate. Involved in the addition of a carboxymethylaminomethyl (cmnm) group at the wobble position (U34) of certain tRNAs, forming tRNA-cmnm(5)s(2)U34. This Koribacter versatilis (strain Ellin345) protein is tRNA modification GTPase MnmE.